We begin with the raw amino-acid sequence, 591 residues long: NADH-quinone oxidoreductase subunit C/D (591 aa).

Positions methionine 1–glutamine 182 are NADH dehydrogenase I subunit C. The interval aspartate 206–arginine 591 is NADH dehydrogenase I subunit D.

It in the N-terminal section; belongs to the complex I 30 kDa subunit family. This sequence in the C-terminal section; belongs to the complex I 49 kDa subunit family. As to quaternary structure, NDH-1 is composed of 13 different subunits. Subunits NuoB, CD, E, F, and G constitute the peripheral sector of the complex.

It localises to the cell inner membrane. The catalysed reaction is a quinone + NADH + 5 H(+)(in) = a quinol + NAD(+) + 4 H(+)(out). Functionally, NDH-1 shuttles electrons from NADH, via FMN and iron-sulfur (Fe-S) centers, to quinones in the respiratory chain. The immediate electron acceptor for the enzyme in this species is believed to be ubiquinone. Couples the redox reaction to proton translocation (for every two electrons transferred, four hydrogen ions are translocated across the cytoplasmic membrane), and thus conserves the redox energy in a proton gradient. The polypeptide is NADH-quinone oxidoreductase subunit C/D (Psychrobacter cryohalolentis (strain ATCC BAA-1226 / DSM 17306 / VKM B-2378 / K5)).